The sequence spans 78 residues: Small ribosomal subunit protein bS20 (78 aa).

It belongs to the bacterial ribosomal protein bS20 family.

Binds directly to 16S ribosomal RNA. This Streptococcus pneumoniae serotype 2 (strain D39 / NCTC 7466) protein is Small ribosomal subunit protein bS20.